Consider the following 325-residue polypeptide: Formimidoylglutamase (325 aa).

Mn(2+) is bound by residues H125, D155, H157, D159, C246, and D248.

Belongs to the arginase family. Requires Mn(2+) as cofactor.

The enzyme catalyses N-formimidoyl-L-glutamate + H2O = formamide + L-glutamate. It functions in the pathway amino-acid degradation; L-histidine degradation into L-glutamate; L-glutamate from N-formimidoyl-L-glutamate (hydrolase route): step 1/1. Functionally, catalyzes the conversion of N-formimidoyl-L-glutamate to L-glutamate and formamide. The chain is Formimidoylglutamase from Ralstonia nicotianae (strain ATCC BAA-1114 / GMI1000) (Ralstonia solanacearum).